We begin with the raw amino-acid sequence, 446 residues long: Amino-acid acetyltransferase (446 aa).

The 140-residue stretch at 299–438 (EQVRDAEIDD…QKLYNFQRKS (140 aa)) folds into the N-acetyltransferase domain.

It belongs to the acetyltransferase family. ArgA subfamily.

The protein localises to the cytoplasm. It carries out the reaction L-glutamate + acetyl-CoA = N-acetyl-L-glutamate + CoA + H(+). The protein operates within amino-acid biosynthesis; L-arginine biosynthesis; N(2)-acetyl-L-ornithine from L-glutamate: step 1/4. The sequence is that of Amino-acid acetyltransferase from Aliivibrio fischeri (strain ATCC 700601 / ES114) (Vibrio fischeri).